Consider the following 683-residue polypeptide: Methionine--tRNA ligase (683 aa).

Positions 14–24 match the 'HIGH' region motif; that stretch reads PYANGSIHLGH. C145, C148, C158, and C161 together coordinate Zn(2+). Positions 331–335 match the 'KMSKS' region motif; that stretch reads KMSKS. K334 contacts ATP. Positions 581 to 683 constitute a tRNA-binding domain; the sequence is AFAAVDLRVA…SGAKPGQRIK (103 aa).

It belongs to the class-I aminoacyl-tRNA synthetase family. MetG type 1 subfamily. As to quaternary structure, homodimer. Zn(2+) serves as cofactor.

It is found in the cytoplasm. The enzyme catalyses tRNA(Met) + L-methionine + ATP = L-methionyl-tRNA(Met) + AMP + diphosphate. In terms of biological role, is required not only for elongation of protein synthesis but also for the initiation of all mRNA translation through initiator tRNA(fMet) aminoacylation. This is Methionine--tRNA ligase from Pseudomonas fluorescens (strain SBW25).